An 867-amino-acid chain; its full sequence is Xylosyltransferase 2 (867 aa).

The Cytoplasmic segment spans residues 1–15 (MVASARVQKLVRRYK). A helical; Signal-anchor for type II membrane protein transmembrane segment spans residues 16-36 (LAIATALAILLLQGLVVWSFS). At 37-867 (VLEDDEPGEK…GPVKADGRLR (831 aa)) the chain is on the lumenal side. Residues 41-122 (DEPGEKGRQK…PPPEAPGRQN (82 aa)) are disordered. Over residues 53–65 (RPLDPSEGSKDTD) the composition is skewed to basic and acidic residues. Over residues 73–82 (SAGRRHGRWR) the composition is skewed to basic residues. Residue asparagine 122 is glycosylated (N-linked (GlcNAc...) asparagine). Intrachain disulfides connect cysteine 161/cysteine 189 and cysteine 205/cysteine 447. UDP-alpha-D-xylose is bound by residues valine 238, aspartate 266, and 295–297 (TIW). The N-linked (GlcNAc...) asparagine glycan is linked to asparagine 326. UDP-alpha-D-xylose contacts are provided by residues 399 to 400 (DW), serine 480, and 503 to 504 (RK). 2 disulfides stabilise this stretch: cysteine 580–cysteine 835 and cysteine 828–cysteine 841. N-linked (GlcNAc...) asparagine glycosylation occurs at asparagine 685.

Belongs to the glycosyltransferase 14 family. XylT subfamily. Monomer. The cofactor is Mg(2+). Mn(2+) is required as a cofactor. In terms of processing, contains disulfide bonds.

The protein resides in the golgi apparatus membrane. It localises to the secreted. The catalysed reaction is UDP-alpha-D-xylose + L-seryl-[protein] = 3-O-(beta-D-xylosyl)-L-seryl-[protein] + UDP + H(+). It functions in the pathway glycan metabolism; chondroitin sulfate biosynthesis. The protein operates within glycan metabolism; heparan sulfate biosynthesis. Its function is as follows. Catalyzes the first step in the biosynthesis of chondroitin sulfate, heparan sulfate and dermatan sulfate proteoglycans, such as DCN. Transfers D-xylose from UDP-D-xylose to specific serine residues of the core protein. This Bos taurus (Bovine) protein is Xylosyltransferase 2 (XYLT2).